The sequence spans 296 residues: Regulatory protein PchR (296 aa).

The 96-residue stretch at 201–296 (HAARDLLVGA…RYGISPSEIR (96 aa)) folds into the HTH araC/xylS-type domain. DNA-binding regions (H-T-H motif) lie at residues 218 to 239 (DTLA…RKVF) and 266 to 288 (VSTV…RKRY).

Its function is as follows. Positive activator of the genes for pyochelin and ferripyochelin receptors. This chain is Regulatory protein PchR (pchR), found in Pseudomonas aeruginosa (strain ATCC 15692 / DSM 22644 / CIP 104116 / JCM 14847 / LMG 12228 / 1C / PRS 101 / PAO1).